The sequence spans 2084 residues: MAP kinase-activating death domain protein (2084 aa).

Positions 25–352 constitute a uDENN domain; it reads TPPMPKGLQG…VPVPGSTRVE (328 aa). Residues 117–253 are disordered; that stretch reads PSSAAGSAGA…SPRASRKRTK (137 aa). Residues 118 to 131 are compositionally biased toward low complexity; sequence SSAAGSAGAGNDRP. The span at 132 to 152 shows a compositional bias: gly residues; that stretch reads GNGGPGGHGGGAGGGAGGGGR. The span at 160 to 173 shows a compositional bias: basic and acidic residues; sequence FRRESWRKSMERSS. Residues 174 to 183 show a composition bias toward low complexity; that stretch reads DSAFSSDYRS. Residues 189–204 show a composition bias toward basic and acidic residues; that stretch reads DSDRELTSRRDSDQQR. Residues 205–215 show a composition bias toward basic residues; it reads LHSHHSHHQPH. Polar residues predominate over residues 234-245; sequence DSESGGSHSPSP. The region spanning 373–514 is the cDENN domain; sequence RFSLVDFPLH…EGTILKNHLK (142 aa). Residues 516–678 form the dDENN domain; that stretch reads ALTSMTATNT…EWSLTPTNVA (163 aa). Disordered regions lie at residues 557 to 588, 730 to 749, 811 to 863, 891 to 963, 1058 to 1092, 1115 to 1188, and 1305 to 1382; these read TPPH…NSPA, QPTD…SSSY, VASK…TVGS, QESD…SQSS, HSAG…GNNF, FGKK…AENQ, and SSSL…GQST. Residues 558-588 show a composition bias toward polar residues; the sequence is PPHSAQASQRNSMSAQGTISSRQPSPMNSPA. A compositionally biased stretch (low complexity) spans 824 to 839; that stretch reads SPVSSSSSRSDLSSPS. The segment covering 913–925 has biased composition (basic and acidic residues); the sequence is HPSDSESRPEKKI. Positions 946–963 are enriched in low complexity; sequence GSSGSSSSSPGRQSSQSS. Positions 1121 to 1131 are enriched in low complexity; the sequence is QKQVPVQQKQP. Positions 1168 to 1183 are enriched in basic and acidic residues; sequence TQEELTRQQNQERSHS. Over residues 1305–1315 the composition is skewed to low complexity; sequence SSSLLSSHAAS. 2 stretches are compositionally biased toward polar residues: residues 1324-1353 and 1370-1382; these read RSPS…STQL and RLSS…GQST. The 76-residue stretch at 1490 to 1565 folds into the Death domain; it reads GMDQGPIEMM…GLVYSQEVHN (76 aa). Residues 1794 to 1842 show a composition bias toward low complexity; sequence DIHAQQKQKHQQQQQHQQPQQQQQPHQTTTQQNQPTAVASAVPTTTAPA. Disordered regions lie at residues 1794–1865 and 1896–2084; these read DIHA…RHTV and VPVP…HRKH. Polar residues predominate over residues 1845-1858; sequence VNPNRMTAKSQAGS. The span at 1896 to 1907 shows a compositional bias: pro residues; the sequence is VPVPPTPAPPTS. Polar residues predominate over residues 1921 to 1932; sequence SQPSTESLASIS. Pro residues-rich tracts occupy residues 1933-1953 and 1983-1993; these read SPPP…PAIP and QYTPQPPPPFV. Composition is skewed to low complexity over residues 2001–2029 and 2059–2077; these read LARA…HSQS and ISGS…ASAS.

Belongs to the MADD family.

It is found in the cell membrane. The protein resides in the cytoplasm. Guanyl-nucleotide exchange factor that regulates small GTPases. Converts GDP-bound inactive form of Rab3 to the GTP-bound active forms. The sequence is that of MAP kinase-activating death domain protein from Drosophila melanogaster (Fruit fly).